We begin with the raw amino-acid sequence, 529 residues long: Bifunctional purine biosynthesis protein PurH (529 aa).

The 148-residue stretch at 1–148 (MQQRRPVRRA…KNHKDVAIVV (148 aa)) folds into the MGS-like domain.

This sequence belongs to the PurH family.

It catalyses the reaction (6R)-10-formyltetrahydrofolate + 5-amino-1-(5-phospho-beta-D-ribosyl)imidazole-4-carboxamide = 5-formamido-1-(5-phospho-D-ribosyl)imidazole-4-carboxamide + (6S)-5,6,7,8-tetrahydrofolate. The enzyme catalyses IMP + H2O = 5-formamido-1-(5-phospho-D-ribosyl)imidazole-4-carboxamide. It participates in purine metabolism; IMP biosynthesis via de novo pathway; 5-formamido-1-(5-phospho-D-ribosyl)imidazole-4-carboxamide from 5-amino-1-(5-phospho-D-ribosyl)imidazole-4-carboxamide (10-formyl THF route): step 1/1. The protein operates within purine metabolism; IMP biosynthesis via de novo pathway; IMP from 5-formamido-1-(5-phospho-D-ribosyl)imidazole-4-carboxamide: step 1/1. This Salmonella newport (strain SL254) protein is Bifunctional purine biosynthesis protein PurH.